Here is a 378-residue protein sequence, read N- to C-terminus: Virion membrane protein A16 (378 aa).

The N-myristoyl glycine; by host moiety is linked to residue G2. At 2-342 the chain is on the virion surface side; the sequence is GAAVTLNRIK…VVKDKIKLPT (341 aa). A helical; Signal-anchor for type II membrane protein membrane pass occupies residues 343–363; that stretch reads WLGAAITLVVISVIFYFISIY. Residues 364-378 are Intravirion-facing; it reads SRPKIKTNDINVRRR.

The protein belongs to the poxviridae A16/G9/J5 family. In terms of assembly, part of a stable entry-fusion complex (EFC) which is at least composed of proteins A16, A21, A28, G3, G9, H2, J5, and L5. Formation of the viral membrane is necessary for the assembly of the complex. Interacts with G9. Post-translationally, most cysteines are linked by disulfide bonds. They are created by the viral disulfide bond formation pathway, a poxvirus-specific redox pathway that operates on the cytoplasmic side of the MV membranes.

The protein resides in the virion membrane. Its function is as follows. Envelope protein part of the entry-fusion complex responsible for the virus membrane fusion with host cell membrane during virus entry. Also plays a role in cell-cell fusion (syncytium formation). This chain is Virion membrane protein A16, found in Oryctolagus cuniculus (Rabbit).